An 89-amino-acid polypeptide reads, in one-letter code: Small ribosomal subunit protein uS17 (89 aa).

Belongs to the universal ribosomal protein uS17 family. In terms of assembly, part of the 30S ribosomal subunit.

One of the primary rRNA binding proteins, it binds specifically to the 5'-end of 16S ribosomal RNA. In Polaromonas sp. (strain JS666 / ATCC BAA-500), this protein is Small ribosomal subunit protein uS17.